Here is a 1482-residue protein sequence, read N- to C-terminus: Cystic fibrosis transmembrane conductance regulator (1482 aa).

The Cytoplasmic portion of the chain corresponds to 1 to 77; it reads MQKSPLERAS…KLINALRRCF (77 aa). Residues 78–98 form a helical membrane-spanning segment; the sequence is FWRFVFYGILLYLGEVTKAVQ. Residues 81-365 form the ABC transmembrane type-1 1 domain; the sequence is FVFYGILLYL…WAVQTWYDSL (285 aa). Residues 99 to 122 are Extracellular-facing; the sequence is PLLLGRIIASYDPDNKVERSIAIY. A helical membrane pass occupies residues 123-146; it reads LAIGLCLLFIVRTLLLHPAIFGLH. Over 147–195 the chain is Cytoplasmic; that stretch reads HMGMQMRIAMFSLIYKKTLKLSSRVLDKISIGQLVSLLSNNLNKFDEGL. A helical transmembrane segment spans residues 196–216; it reads ALAHFVWIAPLQVTLLMGLIW. Residues 217–222 lie on the Extracellular side of the membrane; that stretch reads DLLQAS. A helical membrane pass occupies residues 223–243; it reads AFCGLAFLIIVALGQAGLGRM. Residues 244-298 are Cytoplasmic-facing; that stretch reads MMKYRDKRAGKINERLVITSEMIENIQSVKAYCWEEAMEKMIENLRQIELRLTRK. Residues 299–319 traverse the membrane as a helical segment; the sequence is AAYVRYFNSAAFFFSGFFVVF. The Extracellular segment spans residues 320–339; that stretch reads LSVLPYAMLKGIILRKIFTT. The chain crosses the membrane as a helical span at residues 340 to 358; the sequence is ISFCIVLRMAVTRQFPWAV. At 359-858 the chain is on the cytoplasmic side; sequence QTWYDSLGAI…YLRYVTVHKS (500 aa). Residues tryptophan 401, serine 434, 458-465, and glutamine 493 contribute to the ATP site; that span reads GSTGAGKT. The 224-residue stretch at 423–646 folds into the ABC transporter 1 domain; the sequence is NGDNSLFFSN…RPDFSSELMG (224 aa). A lipid anchor (S-palmitoyl cysteine) is attached at cysteine 524. Residues serine 549 and serine 660 each carry the phosphoserine modification. The interval 654 to 831 is disordered R region; sequence SAERRNSILT…EEINEEDLKE (178 aa). Position 670 is a phosphoserine; by PKA (serine 670). Serine 685 is subject to Phosphoserine. Residue lysine 687 forms a Glycyl lysine isopeptide (Lys-Gly) (interchain with G-Cter in ubiquitin) linkage. Residues serine 699 and serine 711 each carry the phosphoserine modification. Residue threonine 716 is modified to Phosphothreonine. Phosphoserine occurs at positions 736, 767, 790, 795, and 813. The chain crosses the membrane as a helical span at residues 859 to 879; sequence LIFVLIWCLVVFLAEVAVSLV. Residues 859-1156 form the ABC transmembrane type-1 2 domain; that stretch reads LIFVLIWCLV…AVNSSIDVDS (298 aa). Topologically, residues 880–919 are extracellular; that stretch reads VLYLLRTSSLQDKGNNTTVNANSSYGVIVTNTSSYYLLYI. Residues asparagine 894, asparagine 895, asparagine 901, and asparagine 910 are each glycosylated (N-linked (GlcNAc...) asparagine). The discontinuously helical transmembrane segment at 920 to 940 threads the bilayer; it reads YVGIADSLFALAIFRGLPLVH. The Cytoplasmic portion of the chain corresponds to 941–991; it reads TLIKVSKTLHHKMLRSILQAPMSTFNTLKAGRILNRFSKDIAILDDLLPLT. The helical transmembrane segment at 992 to 1012 threads the bilayer; that stretch reads MFDFIQLLLIVIGAVVVVSVL. The Extracellular portion of the chain corresponds to 1013–1014; the sequence is QP. The chain crosses the membrane as a helical span at residues 1015–1035; it reads YIFLATVPVIAAFIILRAYFL. The Cytoplasmic portion of the chain corresponds to 1036–1096; sequence HTSQQLKQLE…TANWFLYLST (61 aa). The helical transmembrane segment at 1097 to 1117 threads the bilayer; it reads LRWFQMRIEIIFVIFFIAVTF. Over 1118–1131 the chain is Extracellular; it reads VSILTTGEGEGTIG. Residues 1132–1152 form a helical membrane-spanning segment; that stretch reads IILTLAMNIMNTLQWAVNSSI. Residues 1153-1482 are Cytoplasmic-facing; it reads DVDSLMRSVS…TEEEVQETRL (330 aa). The region spanning 1212-1445 is the ABC transporter 2 domain; that stretch reads MTVKDLTAKY…KSLFRQAISP (234 aa). ATP contacts are provided by residues tyrosine 1221 and 1246 to 1253; that span reads GRTGSGKS. Residues 1388-1482 form an interaction with GORASP2 region; that stretch reads RTLKQAFADC…TEEEVQETRL (95 aa). Residue cysteine 1397 is the site of S-palmitoyl cysteine attachment. The segment covering 1454–1463 has biased composition (basic residues); it reads HRNSSRHRSR. A disordered region spans residues 1454 to 1482; it reads HRNSSRHRSRSQIAALKEETEEEVQETRL. Serine 1458 carries the post-translational modification Phosphoserine. The segment covering 1472–1482 has biased composition (acidic residues); sequence ETEEEVQETRL. Residues 1480-1482 carry the PDZ-binding motif; it reads TRL.

It belongs to the ABC transporter superfamily. ABCC family. CFTR transporter (TC 3.A.1.202) subfamily. As to quaternary structure, monomer; does not require oligomerization for channel activity. May form oligomers in the membrane. Interacts with SLC26A3, SLC26A6 and NHERF1. Interacts with SHANK2. Interacts with MYO6. Interacts (via C-terminus) with GOPC (via PDZ domain); this promotes CFTR internalization and thereby decreases channel activity. Interacts with SLC4A7 through NHERF1. Found in a complex with MYO5B and RAB11A. Interacts with ANO1. Interacts with SLC26A8. Interacts with AHCYL1; the interaction increases CFTR activity. Interacts with CSE1L. The core-glycosylated form interacts with GORASP2 (via PDZ GRASP-type 1 domain) in respone to ER stress. Interacts with MARCHF2; the interaction leads to CFTR ubiqtuitination and degradation. Interacts with ADGRG2. N-glycosylated. In terms of processing, phosphorylated; cAMP treatment promotes phosphorylation and activates the channel. Dephosphorylation decreases the ATPase activity (in vitro). Phosphorylation at PKA sites activates the channel. Phosphorylation at PKC sites enhances the response to phosphorylation by PKA. Phosphorylated by AMPK; this inhibits channel activity. Post-translationally, ubiquitinated, leading to its degradation in the lysosome. Deubiquitination by USP10 in early endosomes enhances its endocytic recycling to the cell membrane. Ubiquitinated by RNF185 during ER stress. Ubiquitinated by MARCHF2.

Its subcellular location is the apical cell membrane. The protein localises to the early endosome membrane. It localises to the cell membrane. It is found in the recycling endosome membrane. The protein resides in the endoplasmic reticulum membrane. Its subcellular location is the nucleus. It carries out the reaction ATP + H2O + closed Cl(-) channel = ADP + phosphate + open Cl(-) channel.. It catalyses the reaction chloride(in) = chloride(out). The enzyme catalyses hydrogencarbonate(in) = hydrogencarbonate(out). The catalysed reaction is ATP + H2O = ADP + phosphate + H(+). Epithelial ion channel that plays an important role in the regulation of epithelial ion and water transport and fluid homeostasis. Mediates the transport of chloride ions across the cell membrane. Possesses an intrinsic ATPase activity and utilizes ATP to gate its channel; the passive flow of anions through the channel is gated by cycles of ATP binding and hydrolysis by the ATP-binding domains. The ion channel is also permeable to HCO(3)(-); selectivity depends on the extracellular chloride concentration. Exerts its function also by modulating the activity of other ion channels and transporters. Contributes to the regulation of the pH and the ion content of the epithelial fluid layer. Modulates the activity of the epithelial sodium channel (ENaC) complex, in part by regulating the cell surface expression of the ENaC complex. May regulate bicarbonate secretion and salvage in epithelial cells by regulating the transporter SLC4A7. Can inhibit the chloride channel activity of ANO1. Plays a role in the chloride and bicarbonate homeostasis during sperm epididymal maturation and capacitation. This is Cystic fibrosis transmembrane conductance regulator from Loxodonta africana (African elephant).